A 233-amino-acid polypeptide reads, in one-letter code: uncharacterized protein (233 aa).

Transmembrane regions (helical) follow at residues 4-24, 35-55, and 66-86; these read LAIL…NHDT, FGQL…ILQS, and IAIW…RFEL.

It localises to the cell membrane. This is an uncharacterized protein from Sinorhizobium sp.